The primary structure comprises 363 residues: MYLFQERIYNFGAGPAMLPNEVMEIAAAEFLNYKGSGMSVMEVSHREPLFEDVITEAEILLRKLLNLGEDYSIAFFSGGATLHFSALPLNLLKEGESFDVAHTGIWTKKAWEEGLKFNEVNVIYDSTNNHFTDVPVLTDSNLSGKGKYLHITSNNTIYGTQYPEIPKIKQIPLVADMTSELLSRKIDVKDFGVIFAGAQKNIGPSGLSLAIIRNDLLGISGRKIPILLDYSVMVKNRSLYNTPSTYSIYIAKLVFEWLLKLGGIEAIEKVNEQKAKLIYDFIDSSSLYVCPVQKRARSKMNVVFLLKDKNLDSKFLDEAEKNGLHGLGGHRLVGGFRASIYNSMPLTGVQKLVSFMKDFESKI.

Arg46 is an L-glutamate binding site. Pyridoxal 5'-phosphate is bound by residues 80–81 (AT), Trp106, Thr156, Asp176, and Gln199. At Lys200 the chain carries N6-(pyridoxal phosphate)lysine. Residue 241-242 (NT) coordinates pyridoxal 5'-phosphate.

Belongs to the class-V pyridoxal-phosphate-dependent aminotransferase family. SerC subfamily. Homodimer. Requires pyridoxal 5'-phosphate as cofactor.

Its subcellular location is the cytoplasm. It carries out the reaction O-phospho-L-serine + 2-oxoglutarate = 3-phosphooxypyruvate + L-glutamate. The enzyme catalyses 4-(phosphooxy)-L-threonine + 2-oxoglutarate = (R)-3-hydroxy-2-oxo-4-phosphooxybutanoate + L-glutamate. The protein operates within amino-acid biosynthesis; L-serine biosynthesis; L-serine from 3-phospho-D-glycerate: step 2/3. Its pathway is cofactor biosynthesis; pyridoxine 5'-phosphate biosynthesis; pyridoxine 5'-phosphate from D-erythrose 4-phosphate: step 3/5. Functionally, catalyzes the reversible conversion of 3-phosphohydroxypyruvate to phosphoserine and of 3-hydroxy-2-oxo-4-phosphonooxybutanoate to phosphohydroxythreonine. The protein is Phosphoserine aminotransferase of Leptospira interrogans serogroup Icterohaemorrhagiae serovar copenhageni (strain Fiocruz L1-130).